A 233-amino-acid chain; its full sequence is Aspartate/glutamate leucyltransferase (233 aa).

The protein belongs to the R-transferase family. Bpt subfamily.

It is found in the cytoplasm. It carries out the reaction N-terminal L-glutamyl-[protein] + L-leucyl-tRNA(Leu) = N-terminal L-leucyl-L-glutamyl-[protein] + tRNA(Leu) + H(+). It catalyses the reaction N-terminal L-aspartyl-[protein] + L-leucyl-tRNA(Leu) = N-terminal L-leucyl-L-aspartyl-[protein] + tRNA(Leu) + H(+). In terms of biological role, functions in the N-end rule pathway of protein degradation where it conjugates Leu from its aminoacyl-tRNA to the N-termini of proteins containing an N-terminal aspartate or glutamate. This chain is Aspartate/glutamate leucyltransferase, found in Vibrio cholerae serotype O1 (strain ATCC 39315 / El Tor Inaba N16961).